Consider the following 96-residue polypeptide: Small ribosomal subunit protein bS6 (96 aa).

It belongs to the bacterial ribosomal protein bS6 family.

Its function is as follows. Binds together with bS18 to 16S ribosomal RNA. This Salinispora arenicola (strain CNS-205) protein is Small ribosomal subunit protein bS6.